The chain runs to 124 residues: Large ribosomal subunit protein uL22 (124 aa).

This sequence belongs to the universal ribosomal protein uL22 family. As to quaternary structure, part of the 50S ribosomal subunit.

In terms of biological role, this protein binds specifically to 23S rRNA; its binding is stimulated by other ribosomal proteins, e.g. L4, L17, and L20. It is important during the early stages of 50S assembly. It makes multiple contacts with different domains of the 23S rRNA in the assembled 50S subunit and ribosome. Its function is as follows. The globular domain of the protein is located near the polypeptide exit tunnel on the outside of the subunit, while an extended beta-hairpin is found that lines the wall of the exit tunnel in the center of the 70S ribosome. The polypeptide is Large ribosomal subunit protein uL22 (Buchnera aphidicola subsp. Cinara cedri (strain Cc)).